Here is a 687-residue protein sequence, read N- to C-terminus: Methionine--tRNA ligase (687 aa).

The 'HIGH' region motif lies at P14–H24. 4 residues coordinate Zn(2+): C145, C148, C158, and C161. The 'KMSKS' region signature appears at K329–S333. ATP is bound at residue K332. The 103-residue stretch at D585 to K687 folds into the tRNA-binding domain.

Belongs to the class-I aminoacyl-tRNA synthetase family. MetG type 1 subfamily. Homodimer. Zn(2+) serves as cofactor.

It is found in the cytoplasm. The catalysed reaction is tRNA(Met) + L-methionine + ATP = L-methionyl-tRNA(Met) + AMP + diphosphate. Its function is as follows. Is required not only for elongation of protein synthesis but also for the initiation of all mRNA translation through initiator tRNA(fMet) aminoacylation. In Bdellovibrio bacteriovorus (strain ATCC 15356 / DSM 50701 / NCIMB 9529 / HD100), this protein is Methionine--tRNA ligase.